We begin with the raw amino-acid sequence, 1423 residues long: Interphotoreceptor matrix proteoglycan 2 (1423 aa).

The N-terminal stretch at 1-27 (MFAFLWKISLCLLVLGVITGDPQAVAA) is a signal peptide. Over 28 to 1289 (EEKQAKDASP…EYVSEPLVVG (1262 aa)) the chain is Extracellular. Asn150 carries N-linked (GlcNAc...) asparagine glycosylation. The 114-residue stretch at 245–358 (TEQMIEFSIV…NPTVVYTISD (114 aa)) folds into the SEA 1 domain. The hyaluronan-binding motif involved in chondroitin sulfate A-binding stretch occupies residues 265 to 273 (SDPDTAKYQ). Residues Asn325 and Asn375 are each glycosylated (N-linked (GlcNAc...) asparagine). Disordered regions lie at residues 423–469 (AERP…DSEV), 522–559 (DSSDEFEDTGLSDDFLLPSSPSSHLVPEEPPSTDDYTA), and 577–602 (TKRTVTAEKEVVTQGSPADSSSADSL). The segment covering 523 to 532 (SSDEFEDTGL) has biased composition (acidic residues). Over residues 537-546 (LLPSSPSSHL) the composition is skewed to low complexity. Residues 577 to 587 (TKRTVTAEKEV) are compositionally biased toward basic and acidic residues. N-linked (GlcNAc...) asparagine glycosylation is present at Asn676. The disordered stretch occupies residues 886–907 (FEVSTDTSTEEQQSLDSSLADR). Positions 889–902 (STDTSTEEQQSLDS) are enriched in polar residues. The region spanning 1083 to 1196 (RALVVFFSLR…YSLDVESGEQ (114 aa)) is the SEA 2 domain. Residues Asn1128, Asn1142, and Asn1160 are each glycosylated (N-linked (GlcNAc...) asparagine). EGF-like domains lie at 1196 to 1234 (QADPCKFQACNEFSECLVNRWSGEAECVCNPGYLSIDGL) and 1237 to 1279 (NSIC…EHCE). Cystine bridges form between Cys1200–Cys1211, Cys1205–Cys1222, Cys1240–Cys1253, Cys1247–Cys1263, and Cys1265–Cys1278. A hyaluronan-binding motif involved in chondroitin sulfate C-binding region spans residues 1266 to 1274 (RVGENWWYR). Residues 1290-1310 (IAIASVAGFLLVASAVIFFLA) form a helical membrane-spanning segment. The Cytoplasmic segment spans residues 1311–1423 (RTLRDQYTKS…FVRQHQMKLL (113 aa)). Residues 1322 to 1327 (TEDSQG) are hyaluronan-binding motif involved in chondroitin sulfate C-binding.

Highly glycosylated (N- and O-linked carbohydrates). In terms of tissue distribution, expressed in retina.

The protein localises to the photoreceptor outer segment membrane. The protein resides in the photoreceptor inner segment membrane. It is found in the secreted. Its subcellular location is the extracellular space. It localises to the extracellular matrix. The protein localises to the interphotoreceptor matrix. In terms of biological role, chondroitin sulfate- and hyaluronan-binding proteoglycan involved in the organization of interphotoreceptor matrix. The sequence is that of Interphotoreceptor matrix proteoglycan 2 (IMPG2) from Gallus gallus (Chicken).